A 335-amino-acid chain; its full sequence is Tetraacyldisaccharide 4'-kinase (335 aa).

ATP is bound at residue 58–65; it reads TAGGSGKT.

This sequence belongs to the LpxK family.

The enzyme catalyses a lipid A disaccharide + ATP = a lipid IVA + ADP + H(+). It functions in the pathway glycolipid biosynthesis; lipid IV(A) biosynthesis; lipid IV(A) from (3R)-3-hydroxytetradecanoyl-[acyl-carrier-protein] and UDP-N-acetyl-alpha-D-glucosamine: step 6/6. In terms of biological role, transfers the gamma-phosphate of ATP to the 4'-position of a tetraacyldisaccharide 1-phosphate intermediate (termed DS-1-P) to form tetraacyldisaccharide 1,4'-bis-phosphate (lipid IVA). The sequence is that of Tetraacyldisaccharide 4'-kinase from Shewanella frigidimarina (strain NCIMB 400).